A 384-amino-acid chain; its full sequence is Cobalt-precorrin-5B C(1)-methyltransferase (384 aa).

Belongs to the CbiD family.

The catalysed reaction is Co-precorrin-5B + S-adenosyl-L-methionine = Co-precorrin-6A + S-adenosyl-L-homocysteine. Its pathway is cofactor biosynthesis; adenosylcobalamin biosynthesis; cob(II)yrinate a,c-diamide from sirohydrochlorin (anaerobic route): step 6/10. In terms of biological role, catalyzes the methylation of C-1 in cobalt-precorrin-5B to form cobalt-precorrin-6A. The sequence is that of Cobalt-precorrin-5B C(1)-methyltransferase from Ruminiclostridium cellulolyticum (strain ATCC 35319 / DSM 5812 / JCM 6584 / H10) (Clostridium cellulolyticum).